Here is a 239-residue protein sequence, read N- to C-terminus: tRNA (guanine-N(1)-)-methyltransferase (239 aa).

S-adenosyl-L-methionine-binding positions include glycine 115 and 134-139 (MGDFVL). Positions 210 to 239 (QQQREQRTQERRPDLWNRWQQIQNPTPPAP) are disordered. Basic and acidic residues predominate over residues 211–224 (QQREQRTQERRPDL).

Belongs to the RNA methyltransferase TrmD family. In terms of assembly, homodimer.

It is found in the cytoplasm. It catalyses the reaction guanosine(37) in tRNA + S-adenosyl-L-methionine = N(1)-methylguanosine(37) in tRNA + S-adenosyl-L-homocysteine + H(+). Specifically methylates guanosine-37 in various tRNAs. The chain is tRNA (guanine-N(1)-)-methyltransferase from Synechococcus sp. (strain CC9311).